Reading from the N-terminus, the 902-residue chain is Translation initiation factor IF-2 (902 aa).

A compositionally biased stretch (basic and acidic residues) spans 137-177 (NLDEQQRLAESDRARDEAIQRKRDEEQAAKDRVEAERKAAE). Disordered stretches follow at residues 137–248 (NLDE…SHVM) and 266–314 (HLSA…ERPT). Composition is skewed to low complexity over residues 178-229 (EAAA…ATPA) and 279-291 (RGKPTGRPGSSSS). A tr-type G domain is found at 401–570 (SRPPVVTIMG…SLQAEVLELK (170 aa)). Positions 410–417 (GHVDHGKT) are G1. Residue 410–417 (GHVDHGKT) coordinates GTP. The interval 435 to 439 (GITQH) is G2. The segment at 456-459 (DTPG) is G3. GTP-binding positions include 456–460 (DTPGH) and 510–513 (NKID). The tract at residues 510–513 (NKID) is G4. Residues 546 to 548 (SAK) are G5.

The protein belongs to the TRAFAC class translation factor GTPase superfamily. Classic translation factor GTPase family. IF-2 subfamily.

The protein localises to the cytoplasm. In terms of biological role, one of the essential components for the initiation of protein synthesis. Protects formylmethionyl-tRNA from spontaneous hydrolysis and promotes its binding to the 30S ribosomal subunits. Also involved in the hydrolysis of GTP during the formation of the 70S ribosomal complex. This is Translation initiation factor IF-2 from Xanthomonas campestris pv. campestris (strain 8004).